A 61-amino-acid polypeptide reads, in one-letter code: Large ribosomal subunit protein uL30 (61 aa).

The protein belongs to the universal ribosomal protein uL30 family. As to quaternary structure, part of the 50S ribosomal subunit.

This chain is Large ribosomal subunit protein uL30, found in Bordetella avium (strain 197N).